The chain runs to 158 residues: Endoribonuclease YbeY (158 aa).

Zn(2+)-binding residues include His114, His118, and His124.

It belongs to the endoribonuclease YbeY family. Zn(2+) serves as cofactor.

It localises to the cytoplasm. Its function is as follows. Single strand-specific metallo-endoribonuclease involved in late-stage 70S ribosome quality control and in maturation of the 3' terminus of the 16S rRNA. The polypeptide is Endoribonuclease YbeY (Pasteurella multocida (strain Pm70)).